The following is a 384-amino-acid chain: Putative glutamate--cysteine ligase 2-2 (384 aa).

It belongs to the glutamate--cysteine ligase type 2 family. YbdK subfamily.

The catalysed reaction is L-cysteine + L-glutamate + ATP = gamma-L-glutamyl-L-cysteine + ADP + phosphate + H(+). Its function is as follows. ATP-dependent carboxylate-amine ligase which exhibits weak glutamate--cysteine ligase activity. The polypeptide is Putative glutamate--cysteine ligase 2-2 (Rubrobacter xylanophilus (strain DSM 9941 / JCM 11954 / NBRC 16129 / PRD-1)).